The following is a 218-amino-acid chain: Glutathione S-transferase Mu 2 (218 aa).

The region spanning 2-88 is the GST N-terminal domain; the sequence is PMTLGYWDIR…YLGRKHNLCG (87 aa). 7–8 serves as a coordination point for glutathione; sequence YW. 2 positions are modified to phosphoserine: Ser-27 and Ser-44. Residues 43–46, Lys-50, 59–60, and 72–73 contribute to the glutathione site; these read RSQW, NL, and QS. The 125-residue stretch at 90-214 folds into the GST C-terminal domain; that stretch reads TEEERIRVDV…SKPIFAKMAF (125 aa). Tyr-116 contacts substrate. The residue at position 117 (Ser-117) is a Phosphoserine.

The protein belongs to the GST superfamily. Mu family. Homodimer or heterodimer.

The protein localises to the cytoplasm. The enzyme catalyses RX + glutathione = an S-substituted glutathione + a halide anion + H(+). It carries out the reaction 11(S)-hydroxy-14(S),15(S)-epoxy-(5Z,8Z,12E)-eicosatrienoate + glutathione = (11S,15S)-dihydroxy-14(R)-S-glutathionyl-(5Z,8Z,12E)-eicosatrienoate. Functionally, conjugation of reduced glutathione to a wide number of exogenous and endogenous hydrophobic electrophiles. Participates in the formation of novel hepoxilin regioisomers. The protein is Glutathione S-transferase Mu 2 of Rattus norvegicus (Rat).